The chain runs to 395 residues: Chorismate synthase (395 aa).

NADP(+) is bound by residues R40 and R46. Positions 99-120 are disordered; sequence PREGRNAPLSRPRPGHADLTGM. FMN is bound by residues 134-136, 256-257, G301, 316-320, and R342; these read RSS, QA, and KPIPS.

It belongs to the chorismate synthase family. As to quaternary structure, homotetramer. FMNH2 is required as a cofactor.

It catalyses the reaction 5-O-(1-carboxyvinyl)-3-phosphoshikimate = chorismate + phosphate. It functions in the pathway metabolic intermediate biosynthesis; chorismate biosynthesis; chorismate from D-erythrose 4-phosphate and phosphoenolpyruvate: step 7/7. Catalyzes the anti-1,4-elimination of the C-3 phosphate and the C-6 proR hydrogen from 5-enolpyruvylshikimate-3-phosphate (EPSP) to yield chorismate, which is the branch point compound that serves as the starting substrate for the three terminal pathways of aromatic amino acid biosynthesis. This reaction introduces a second double bond into the aromatic ring system. This is Chorismate synthase from Bifidobacterium longum (strain DJO10A).